The sequence spans 82 residues: Large ribosomal subunit protein bL27c (82 aa).

The disordered stretch occupies residues Met1 to Gly22.

Belongs to the bacterial ribosomal protein bL27 family.

Its subcellular location is the plastid. The protein resides in the chloroplast. This chain is Large ribosomal subunit protein bL27c (rpl27), found in Chrysotila carterae (Marine alga).